The sequence spans 358 residues: B3 domain-containing protein Os12g0592300 (358 aa).

The TF-B3 1 DNA-binding region spans 25 to 122 (RIRFFRLMTG…SFDVLIFDAS (98 aa)). The segment at 148-215 (YHLSDSEDTS…EKSDDDDEHA (68 aa)) is disordered. The segment covering 156-181 (TSTPSTFLVGSPHKASTSKKLNGKTK) has biased composition (polar residues). Residues 203–215 (IEEEKSDDDDEHA) show a composition bias toward acidic residues. A DNA-binding region (TF-B3 2) is located at residues 252–350 (FVTVLQAPQI…TMTVHVIGKV (99 aa)).

Its subcellular location is the nucleus. The polypeptide is B3 domain-containing protein Os12g0592300 (Oryza sativa subsp. japonica (Rice)).